A 397-amino-acid chain; its full sequence is Na(+)/H(+) antiporter NhaA (397 aa).

12 consecutive transmembrane segments (helical) span residues 14–34 (ASGI…NTPL), 36–56 (DLYF…FSIY), 59–79 (LLMW…GLEV), 95–115 (IFPA…FTLI), 125–145 (GWAI…GLLG), 154–174 (IFLL…IAIF), 177–197 (HELS…LIIM), 204–224 (AICA…KSGV), 254–274 (LLAP…NAGV), 292–312 (VALG…FLAV), 328–348 (IFAV…LAGL), and 365–385 (LGIL…LKLC).

It belongs to the NhaA Na(+)/H(+) (TC 2.A.33) antiporter family.

The protein localises to the cell inner membrane. It catalyses the reaction Na(+)(in) + 2 H(+)(out) = Na(+)(out) + 2 H(+)(in). Na(+)/H(+) antiporter that extrudes sodium in exchange for external protons. The sequence is that of Na(+)/H(+) antiporter NhaA from Glaesserella parasuis serovar 5 (strain SH0165) (Haemophilus parasuis).